The chain runs to 194 residues: Glycerol-3-phosphate acyltransferase (194 aa).

The next 5 membrane-spanning stretches (helical) occupy residues 4–24, 80–100, 112–132, 137–157, and 161–181; these read ELILTAVAYIVGSIPTGLLLA, WVAAVGLAAFLGHVYTIFLGF, VFLGVSPLSVLGALALFIGIV, YISLGSIIAAAAMPLFVAAVE, and LLVGMTLVIAVIVIVKHRENI.

Belongs to the PlsY family. As to quaternary structure, probably interacts with PlsX.

It localises to the cell inner membrane. The enzyme catalyses an acyl phosphate + sn-glycerol 3-phosphate = a 1-acyl-sn-glycero-3-phosphate + phosphate. It functions in the pathway lipid metabolism; phospholipid metabolism. Its function is as follows. Catalyzes the transfer of an acyl group from acyl-phosphate (acyl-PO(4)) to glycerol-3-phosphate (G3P) to form lysophosphatidic acid (LPA). This enzyme utilizes acyl-phosphate as fatty acyl donor, but not acyl-CoA or acyl-ACP. This Geobacter sulfurreducens (strain ATCC 51573 / DSM 12127 / PCA) protein is Glycerol-3-phosphate acyltransferase.